Here is a 65-residue protein sequence, read N- to C-terminus: uncharacterized protein (65 aa).

The segment at 1–22 is disordered; sequence MEKETPQQETKQSTNKESGFFD. Residues 7-17 are compositionally biased toward polar residues; that stretch reads QQETKQSTNKE. Residues 22–65 adopt a coiled-coil conformation; sequence DEIIKRTNQLLEKEKELHEKYNKEITSQQDQIDQLKKKINQLKY.

This is an uncharacterized protein from Dictyostelium discoideum (Social amoeba).